The chain runs to 329 residues: Aspartate--ammonia ligase (329 aa).

This sequence belongs to the class-II aminoacyl-tRNA synthetase family. AsnA subfamily.

The protein localises to the cytoplasm. It carries out the reaction L-aspartate + NH4(+) + ATP = L-asparagine + AMP + diphosphate + H(+). Its pathway is amino-acid biosynthesis; L-asparagine biosynthesis; L-asparagine from L-aspartate (ammonia route): step 1/1. The sequence is that of Aspartate--ammonia ligase from Ureaplasma parvum serovar 3 (strain ATCC 27815 / 27 / NCTC 11736).